A 69-amino-acid polypeptide reads, in one-letter code: Neurotoxin Cex3 (69 aa).

Residue A1 is a signal peptide. Residues K2–G67 form the LCN-type CS-alpha/beta domain. Disulfide bonds link C13–C66, C17–C42, C26–C47, and C30–C49. Position 66 is a cysteine amide (C66). A propeptide spanning residues G67 to K69 is cleaved from the precursor.

The protein belongs to the long (4 C-C) scorpion toxin superfamily. Sodium channel inhibitor family. Beta subfamily. Expressed by the venom gland.

It localises to the secreted. Functionally, beta toxins bind voltage-independently at site-4 of sodium channels (Nav) and shift the voltage of activation toward more negative potentials thereby affecting sodium channel activation and promoting spontaneous and repetitive firing. The protein is Neurotoxin Cex3 of Centruroides exilicauda (Bark scorpion).